Consider the following 167-residue polypeptide: Translation initiation factor IF-3 (167 aa).

It belongs to the IF-3 family. In terms of assembly, monomer.

It is found in the cytoplasm. IF-3 binds to the 30S ribosomal subunit and shifts the equilibrium between 70S ribosomes and their 50S and 30S subunits in favor of the free subunits, thus enhancing the availability of 30S subunits on which protein synthesis initiation begins. The polypeptide is Translation initiation factor IF-3 (Bacillus cereus (strain ATCC 14579 / DSM 31 / CCUG 7414 / JCM 2152 / NBRC 15305 / NCIMB 9373 / NCTC 2599 / NRRL B-3711)).